Consider the following 370-residue polypeptide: 3-isopropylmalate dehydrogenase (370 aa).

NAD(+) is bound at residue 77 to 90 (GPKWDSVPYEVRPE). Substrate-binding residues include Arg97, Arg107, Arg135, and Asp226. Asp226, Asp250, and Asp254 together coordinate Mg(2+). 290–302 (GSAPDIAGKGIAN) serves as a coordination point for NAD(+).

The protein belongs to the isocitrate and isopropylmalate dehydrogenases family. LeuB type 1 subfamily. As to quaternary structure, homodimer. Mg(2+) serves as cofactor. Mn(2+) is required as a cofactor.

The protein localises to the cytoplasm. It catalyses the reaction (2R,3S)-3-isopropylmalate + NAD(+) = 4-methyl-2-oxopentanoate + CO2 + NADH. It participates in amino-acid biosynthesis; L-leucine biosynthesis; L-leucine from 3-methyl-2-oxobutanoate: step 3/4. Catalyzes the oxidation of 3-carboxy-2-hydroxy-4-methylpentanoate (3-isopropylmalate) to 3-carboxy-4-methyl-2-oxopentanoate. The product decarboxylates to 4-methyl-2 oxopentanoate. This chain is 3-isopropylmalate dehydrogenase, found in Rhizobium johnstonii (strain DSM 114642 / LMG 32736 / 3841) (Rhizobium leguminosarum bv. viciae).